The following is a 510-amino-acid chain: Protein fork head (510 aa).

Disordered regions lie at residues 1 to 62 (MQKL…SPLA) and 175 to 205 (AMPP…YRRS). A compositionally biased stretch (gly residues) spans 20 to 39 (SGGGGPPSGGGGGGGGGGGG). The segment covering 47-60 (NNPNPTSNGGSMSP) has biased composition (low complexity). 2 positions are modified to phosphoserine: Ser187 and Ser190. Positions 209 to 300 (AKPPYSYISL…GNMFENGCYL (92 aa)) form a DNA-binding region, fork-head. The tract at residues 309–359 (EKKEAIRQLHKSPSHSSLEATSPGKKDHEDSHHMHHHHHSRLDHHQHHKEA) is disordered. Ser320, Ser322, and Ser330 each carry phosphoserine. Basic residues predominate over residues 341-356 (HMHHHHHSRLDHHQHH).

It is found in the nucleus. Functionally, fkh promotes terminal as opposed to segmental development. In the absence of fkh, this developmental switch does not occur. The nuclear localization of the fkh protein suggest that fkh regulates the transcription of other, subordinate, genes. The polypeptide is Protein fork head (fkh) (Drosophila melanogaster (Fruit fly)).